The chain runs to 321 residues: Lipoyl synthase (321 aa).

Residues Cys68, Cys73, Cys79, Cys94, Cys98, Cys101, and Ser308 each contribute to the [4Fe-4S] cluster site. A Radical SAM core domain is found at 80-297 (FNHGTATFMI…KEQALAMGFT (218 aa)).

The protein belongs to the radical SAM superfamily. Lipoyl synthase family. [4Fe-4S] cluster serves as cofactor.

It is found in the cytoplasm. The catalysed reaction is [[Fe-S] cluster scaffold protein carrying a second [4Fe-4S](2+) cluster] + N(6)-octanoyl-L-lysyl-[protein] + 2 oxidized [2Fe-2S]-[ferredoxin] + 2 S-adenosyl-L-methionine + 4 H(+) = [[Fe-S] cluster scaffold protein] + N(6)-[(R)-dihydrolipoyl]-L-lysyl-[protein] + 4 Fe(3+) + 2 hydrogen sulfide + 2 5'-deoxyadenosine + 2 L-methionine + 2 reduced [2Fe-2S]-[ferredoxin]. It functions in the pathway protein modification; protein lipoylation via endogenous pathway; protein N(6)-(lipoyl)lysine from octanoyl-[acyl-carrier-protein]: step 2/2. Catalyzes the radical-mediated insertion of two sulfur atoms into the C-6 and C-8 positions of the octanoyl moiety bound to the lipoyl domains of lipoate-dependent enzymes, thereby converting the octanoylated domains into lipoylated derivatives. The chain is Lipoyl synthase from Proteus mirabilis (strain HI4320).